We begin with the raw amino-acid sequence, 169 residues long: ATP synthase subunit b (169 aa).

A helical transmembrane segment spans residues Leu13–Phe33.

The protein belongs to the ATPase B chain family. As to quaternary structure, F-type ATPases have 2 components, F(1) - the catalytic core - and F(0) - the membrane proton channel. F(1) has five subunits: alpha(3), beta(3), gamma(1), delta(1), epsilon(1). F(0) has three main subunits: a(1), b(2) and c(10-14). The alpha and beta chains form an alternating ring which encloses part of the gamma chain. F(1) is attached to F(0) by a central stalk formed by the gamma and epsilon chains, while a peripheral stalk is formed by the delta and b chains.

The protein localises to the cell inner membrane. Its function is as follows. F(1)F(0) ATP synthase produces ATP from ADP in the presence of a proton or sodium gradient. F-type ATPases consist of two structural domains, F(1) containing the extramembraneous catalytic core and F(0) containing the membrane proton channel, linked together by a central stalk and a peripheral stalk. During catalysis, ATP synthesis in the catalytic domain of F(1) is coupled via a rotary mechanism of the central stalk subunits to proton translocation. In terms of biological role, component of the F(0) channel, it forms part of the peripheral stalk, linking F(1) to F(0). The protein is ATP synthase subunit b of Endomicrobium trichonymphae.